The following is a 321-amino-acid chain: Sideroflexin-3 (321 aa).

Met1 bears the N-acetylmethionine mark. The next 4 membrane-spanning stretches (helical) occupy residues 146–164, 174–194, 226–246, and 266–286; these read LGMAYVSATTGAVATALGL, LVGRFVPFAAVAAANCINIPL, FQVVISRICMAIPAMAIPPVI, and LQMGLVGFCLVFATPLCCALF.

It belongs to the sideroflexin family.

It is found in the mitochondrion membrane. The enzyme catalyses L-serine(in) = L-serine(out). Mitochondrial serine transporter that mediates transport of serine into mitochondria, an important step of the one-carbon metabolism pathway. Mitochondrial serine is converted to glycine and formate, which then exits to the cytosol where it is used to generate the charged folates that serve as one-carbon donors. This is Sideroflexin-3 (SFXN3) from Bos taurus (Bovine).